Consider the following 148-residue polypeptide: RxLR effector protein SFI7 (148 aa).

An N-terminal signal peptide occupies residues 1-22; sequence MRAYFVLLVAATAILTYGGATA. N32 carries an N-linked (GlcNAc...) asparagine glycan. Positions 44–58 match the RxLR-dEER motif; the sequence is RSLRVAPSGGNGEER.

It belongs to the RxLR effector family.

Its subcellular location is the secreted. It is found in the host cytoplasm. It localises to the host cell membrane. Functionally, effector that suppresses flg22-induced post-translational MAP kinase activation in tomato but not in Arabidopsis. The perception of highly conserved pathogen- or microbe-associated molecular patterns (PAMPs/MAMPs), such as flg22, triggers converging signaling pathways recruiting MAP kinase cascades and inducing transcriptional re-programming, yielding a generic antimicrobial response. Also partially attenuates INF1-triggered cell death. The protein is RxLR effector protein SFI7 of Phytophthora infestans (strain T30-4) (Potato late blight agent).